Reading from the N-terminus, the 393-residue chain is Formate-dependent phosphoribosylglycinamide formyltransferase (393 aa).

Residues 22-23 (EL) and E82 contribute to the N(1)-(5-phospho-beta-D-ribosyl)glycinamide site. Residues R114, K155, 160-165 (SSGHGQ), 195-198 (EGFV), and E203 each bind ATP. Residues 119–308 (RLAAEELGLP…EFALHARAIL (190 aa)) enclose the ATP-grasp domain. Mg(2+) is bound by residues E267 and E279. Residues D286, K356, and 363 to 364 (RR) each bind N(1)-(5-phospho-beta-D-ribosyl)glycinamide.

It belongs to the PurK/PurT family. Homodimer.

The enzyme catalyses N(1)-(5-phospho-beta-D-ribosyl)glycinamide + formate + ATP = N(2)-formyl-N(1)-(5-phospho-beta-D-ribosyl)glycinamide + ADP + phosphate + H(+). The protein operates within purine metabolism; IMP biosynthesis via de novo pathway; N(2)-formyl-N(1)-(5-phospho-D-ribosyl)glycinamide from N(1)-(5-phospho-D-ribosyl)glycinamide (formate route): step 1/1. In terms of biological role, involved in the de novo purine biosynthesis. Catalyzes the transfer of formate to 5-phospho-ribosyl-glycinamide (GAR), producing 5-phospho-ribosyl-N-formylglycinamide (FGAR). Formate is provided by PurU via hydrolysis of 10-formyl-tetrahydrofolate. This Pasteurella multocida (strain Pm70) protein is Formate-dependent phosphoribosylglycinamide formyltransferase.